The chain runs to 149 residues: UPF0179 protein Mbar_A0292 (149 aa).

It belongs to the UPF0179 family.

The protein is UPF0179 protein Mbar_A0292 of Methanosarcina barkeri (strain Fusaro / DSM 804).